The chain runs to 151 residues: S-protein homolog 1 (151 aa).

An N-terminal signal peptide occupies residues 1-18 (MNCIKQFLLAICFSLALT).

It belongs to the plant self-incompatibility (S1) protein family. Restricted to floral tissues.

It localises to the secreted. The chain is S-protein homolog 1 from Arabidopsis thaliana (Mouse-ear cress).